A 266-amino-acid polypeptide reads, in one-letter code: Ribosomal RNA small subunit methyltransferase A (266 aa).

6 residues coordinate S-adenosyl-L-methionine: asparagine 11, leucine 13, glycine 37, glutamate 57, aspartate 85, and asparagine 104.

Belongs to the class I-like SAM-binding methyltransferase superfamily. rRNA adenine N(6)-methyltransferase family. RsmA subfamily.

The protein localises to the cytoplasm. It catalyses the reaction adenosine(1518)/adenosine(1519) in 16S rRNA + 4 S-adenosyl-L-methionine = N(6)-dimethyladenosine(1518)/N(6)-dimethyladenosine(1519) in 16S rRNA + 4 S-adenosyl-L-homocysteine + 4 H(+). Functionally, specifically dimethylates two adjacent adenosines (A1518 and A1519) in the loop of a conserved hairpin near the 3'-end of 16S rRNA in the 30S particle. May play a critical role in biogenesis of 30S subunits. The chain is Ribosomal RNA small subunit methyltransferase A from Campylobacter jejuni (strain RM1221).